The chain runs to 122 residues: UPF0102 protein TTE1452 (122 aa).

This sequence belongs to the UPF0102 family.

The sequence is that of UPF0102 protein TTE1452 from Caldanaerobacter subterraneus subsp. tengcongensis (strain DSM 15242 / JCM 11007 / NBRC 100824 / MB4) (Thermoanaerobacter tengcongensis).